Here is a 439-residue protein sequence, read N- to C-terminus: Histone acetyltransferase GCN5 (439 aa).

Composition is skewed to basic and acidic residues over residues 1–28 and 39–59; these read MVTKHQIEEDHLDGATTDPEVKRVKLEN and ETNKQEGTDKENKGKFEKETE. The tract at residues 1–59 is disordered; sequence MVTKHQIEEDHLDGATTDPEVKRVKLENNVEEIQPEQAETNKQEGTDKENKGKFEKETE. One can recognise an N-acetyltransferase domain in the interval 100-255; it reads IEFRVVNNDN…GGTLMQCSML (156 aa). Glu173 serves as the catalytic Proton donor/acceptor. Residues 177-179, 184-190, and 216-219 contribute to the acetyl-CoA site; these read CAI, QVRGYGA, and YAIG. Residues 327 to 431 form the Bromo domain; sequence PKRGPHDAAI…KFFNNKVKEI (105 aa).

The protein belongs to the acetyltransferase family. GCN5 subfamily. Component of the 1.8 MDa SAGA (Spt-Ada-Gcn5 acetyltransferase) complex, which is composed of 19 subunits TRA1, SPT7, TAF5, NGG1/ADA3, SGF73, SPT20/ADA5, SPT8, TAF12, TAF6, HFI1/ADA1, UBP8, GCN5, ADA2, SPT3, SGF29, TAF10, TAF9, SGF11 and SUS1. The SAGA complex is composed of 4 modules, namely the HAT (histone acetyltransferase) module (GCN5, ADA2, NGG1/ADA3 and SGF29), the DUB (deubiquitinating) module (UBP8, SGF11, SGF73 and SUS1), the core or TAF (TBP-associated factor) module (TAF5, TAF6, TAF9, TAF10 and TAF12), and the Tra1 or SPT (Suppressor of Ty) module (TRA1, HFI1/ADA1, SPT3, SPT7, SPT8 and SPT20/ADA5). The Tra1/SPT module binds activators, the core module recruits TBP (TATA-binding protein), the HAT module contains the histone H3 acetyltransferase GCN5, and the DUB module comprises the histone H2B deubiquitinase UBP8. Also identified in an altered form of SAGA, named SALSA (SAGA altered, Spt8 absent) or SLIK (SAGA-like) complex, which contains a C-terminal truncated form of SPT7 and is missing SPT8. However, it has been shown that the SAGA and SAGA-like SALSA/SLIK transcriptional coactivators are structurally and biochemically equivalent. Component of the 0.8 MDa ADA complex, a HAT complex distinct from SAGA, which at least consists of ADA2, NGG1/ADA3, AHC1, AHC2, SGF29 and GCN5. Component of an ADA/GCN5 complex that consists of HFI1/ADA1, ADA2, NGG1/ADA3, SPT20/ADA5 and GCN5 and probably is a subcomplex of SAGA.

The protein localises to the nucleus. It localises to the cytoplasm. The enzyme catalyses L-lysyl-[protein] + acetyl-CoA = N(6)-acetyl-L-lysyl-[protein] + CoA + H(+). The catalysed reaction is (2E)-butenoyl-CoA + L-lysyl-[protein] = N(6)-(2E)-butenoyl-L-lysyl-[protein] + CoA + H(+). Its function is as follows. Histone acetyltransferase that acetylates histone H2B to form H2BK11ac and H2BK16ac, histone H3 to form H3K9ac, H3K14ac, H3K18ac, H3K23ac, H3K27ac and H3K36ac, with a lower preference histone H4 to form H4K8ac and H4K16ac, and contributes to H2A.Z acetylation. Acetylation of histones gives a specific tag for epigenetic transcription activation and elongation. Operates in concert with certain DNA-binding transcriptional activators such as GCN4 or HAP2/3/4. Its acetyltransferase activity seems to be dependent on the association in different multisubunit complexes. Component of the transcription coactivator SAGA complex. SAGA acts as a general cofactor required for essentially all RNA polymerase II transcription. At the promoters, SAGA is required for transcription pre-initiation complex (PIC) recruitment. It influences RNA polymerase II transcriptional activity through different activities such as TBP interaction (via core/TAF module) and promoter selectivity, interaction with transcription activators (via Tra1/SPT module), and chromatin modification through histone acetylation (via HAT module) and deubiquitination (via DUB module). SAGA preferentially acetylates histones H3 (to form H3K9ac, H3K14ac, H3K18ac and H3K23ac) and H2B and deubiquitinates histone H2B. SAGA interacts with DNA via upstream activating sequences (UASs). Also identified in a modified version of SAGA named SALSA or SLIK. The cleavage of SPT7 and the absence of the SPT8 subunit in SLIK neither drive any major conformational differences in its structure compared with SAGA, nor significantly affect HAT, DUB, or DNA-binding activities. Component of the ADA histone acetyltransferase complex, which preferentially acetylates nucleosomal histones H3 (to form H3K14ac and H3K18ac) and H2B. In addition to histone acetyltransferase, can use different acyl-CoA substrates, such as (2E)-butenoyl-CoA (crotonyl-CoA) and is able to mediate histone crotonylation. Controls the metaphase-to-anaphase transition and is required for correct chromosome segregation and centromere/kinetochore function in mitosis. May be involved in response to DNA damage by genotoxic agents. The polypeptide is Histone acetyltransferase GCN5 (Saccharomyces cerevisiae (strain ATCC 204508 / S288c) (Baker's yeast)).